Consider the following 635-residue polypeptide: MLNRIQTLMKTANNYETIEVLRNYLRLYIILARNEEGHGILIYDDNIDSIMSMMNITRLEVIGLTTHCTKLRSSPPIPMSRLFMDEIDHESYYSPKTSDYPLIDIIRKRSHEQGDIALALERYGIENTDSISEINEWLSSKGLACYRFVKFNDYRKQMYRKFPRCTIVDSMIIGHIGHHYIWIKNLETYTRPEIDVLPFDIKYISRDELWARISSSLDQTHIKTIAVSVYGAITDNGPMPYMISTYPGNTFVNFNSVKNLILNFLDWIKDIMTSTRTIILVGYMSNLFDIPLLTVYWPNNCGWKIYNNTLISSDGARVIWMDAYKFSCGLSLQDYCYHWGSKPESRPFDLIKKSDAKRNSKSLVKESMASLKSLYEAFETQSGASEVLMSPCRTFSFSRTEDTFSTSVINRVFENTGTGTYHPINDIPSLFIESSICLDHIIVNNQESNKYRIKSVLDIISSKQYPARRPNYVKNGTKGKLYIALCKVTVPTNDHIPVVYHDDDNTTTFITVLTSVDIETAIRVGYSIVELGALQWDNNIPELKNGLLDSIKMIYDLNAVTTNNLLEQLIENINFNNSSIISLFYTFAISYCRAFIYSIMETIDPVYISQFSYKELYVSSSYKDINESMSQMVKL.

This sequence belongs to the orthopoxvirus OPG056 family. Interacts with protein OPG164. Interacts with protein OPG064.

The protein resides in the virion membrane. It is found in the host endosome. In terms of biological role, plays a role in intracellular enveloped virus (IEV) transport to the cell surface through microtubule transport. Together with protein OPG064, forms a complex that interacts with host KLC2 (kinesin light chain isoform 2) to engage the kinesin-1 complex and thereby promote IEV trafficking. The sequence is that of Protein OPG056 (OPG056) from Homo sapiens (Human).